Reading from the N-terminus, the 1203-residue chain is Cingulin (1203 aa).

Positions 7 to 357 are head; the sequence is MAEPRGPVDH…VMVSSGSTKA (351 aa). The tract at residues 25–48 is disordered; that stretch reads EPVSGAEMGTLRRGGRRPAKDARA. Residues 48–62 carry the ZIM motif; sequence ASTYGVAVRVQGIAG. Positions 54–67 are interaction with TJP1/ZO1; it reads AVRVQGIAGQPFVV. A disordered region spans residues 89–127; the sequence is GASGALSSDLELPENPYSQVKGFPAPSQSSTSDEEPGAY. A phosphoserine mark is found at serine 95, serine 96, serine 135, serine 137, serine 140, serine 155, serine 165, serine 214, serine 217, serine 258, serine 276, serine 338, and serine 351. Residues 186–266 form a disordered region; the sequence is DSQLGGQARG…LSPLSGFSRS (81 aa). Residues 207–231 show a composition bias toward basic and acidic residues; that stretch reads EQRKRSKSLDSRLPRDTFEERERQS. The segment covering 232 to 266 has biased composition (polar residues); it reads TNHWTSSTKYDNHVGTSKQPAQSQNLSPLSGFSRS. The stretch at 358–1160 forms a coiled coil; sequence VAGQGELTRK…SLEKDSWRKA (803 aa). Position 579 is an N6-acetyllysine (lysine 579). Threonine 712 is modified (phosphothreonine). Disordered regions lie at residues 1034-1053 and 1154-1181; these read LASSEGFQKPSASLSQLESQ and KDSWRKASRSAAESALKNEGLSSDEEFD. Low complexity predominate over residues 1044–1053; sequence SASLSQLESQ. The tract at residues 1161 to 1203 is tail; it reads SRSAAESALKNEGLSSDEEFDSVYDPSSIASLLTESNLQTSSC. A phosphoserine mark is found at serine 1175, serine 1176, and serine 1182.

It belongs to the cingulin family. As to quaternary structure, homodimer. Interacts with TJP1/ZO1. Interacts with SPEF1. In terms of tissue distribution, localized on the cytoplasmic face of tight junctions of polarized epithelia and some endothelia. Expressed in pancreas, kidney, liver and lung, but not in skeletal muscle, placenta, brain or heart.

Its subcellular location is the cell junction. It localises to the tight junction. In terms of biological role, probably plays a role in the formation and regulation of the tight junction (TJ) paracellular permeability barrier. The chain is Cingulin from Homo sapiens (Human).